Consider the following 136-residue polypeptide: Small ribosomal subunit protein uS19 (136 aa).

The segment at 117–136 is disordered; that stretch reads VQHGDPGMGATRSSMFVPLK.

The protein belongs to the universal ribosomal protein uS19 family.

In terms of biological role, protein S19 forms a complex with S13 that binds strongly to the 16S ribosomal RNA. The chain is Small ribosomal subunit protein uS19 from Methanobrevibacter smithii (strain ATCC 35061 / DSM 861 / OCM 144 / PS).